A 231-amino-acid polypeptide reads, in one-letter code: Large ribosomal subunit protein uL1 (231 aa).

The protein belongs to the universal ribosomal protein uL1 family. In terms of assembly, part of the 50S ribosomal subunit.

Functionally, binds directly to 23S rRNA. The L1 stalk is quite mobile in the ribosome, and is involved in E site tRNA release. Its function is as follows. Protein L1 is also a translational repressor protein, it controls the translation of the L11 operon by binding to its mRNA. The chain is Large ribosomal subunit protein uL1 from Methylococcus capsulatus (strain ATCC 33009 / NCIMB 11132 / Bath).